A 364-amino-acid chain; its full sequence is MSSFPTVLVIGAGLAGSEAAWQIAQAGVPVRLIEMRPIKHSPAHYSSECAELVCSNSFGALSSDRAAGLLKEELRRLGSIVIRTADSHAVPAGGALAVNRASFSASLTKELSAHPHITIERQEQEHLPDEGQITVLATGPLTSELLAENLRTFTGRSECHFFDAASPIIEGESIDLTLAFRASRYDKGDADYMNCPMDKGQYLAFREALLNAEQAELKEFDKESAKFFEGCLPIEELARRGEDTMRYGPLKPIGLWDPRWGDLNDRDVRRSKRAYAVVQLRKEDLEGRLWNLVGFQTNLKWSEQKRVLKMIPGLHQAEFVRFGVMHRNTFSKPRSYLNQPCSSANDPTSSLLDRSPAQRDIPLQ.

Position 11–16 (11–16 (GAGLAG)) interacts with FAD. Over residues 335–352 (SYLNQPCSSANDPTSSLL) the composition is skewed to polar residues. Positions 335 to 364 (SYLNQPCSSANDPTSSLLDRSPAQRDIPLQ) are disordered.

Belongs to the MnmG family. TrmFO subfamily. FAD is required as a cofactor.

The protein resides in the cytoplasm. It catalyses the reaction uridine(54) in tRNA + (6R)-5,10-methylene-5,6,7,8-tetrahydrofolate + NADH + H(+) = 5-methyluridine(54) in tRNA + (6S)-5,6,7,8-tetrahydrofolate + NAD(+). It carries out the reaction uridine(54) in tRNA + (6R)-5,10-methylene-5,6,7,8-tetrahydrofolate + NADPH + H(+) = 5-methyluridine(54) in tRNA + (6S)-5,6,7,8-tetrahydrofolate + NADP(+). Functionally, catalyzes the folate-dependent formation of 5-methyl-uridine at position 54 (M-5-U54) in all tRNAs. This chain is Methylenetetrahydrofolate--tRNA-(uracil-5-)-methyltransferase TrmFO, found in Prochlorococcus marinus (strain MIT 9313).